The chain runs to 186 residues: Lipid A palmitoyltransferase PagP (186 aa).

Residues 1–25 (MNVSKYVAIFSFVFIQLISVGKVFA) form the signal peptide. Residues His-58, Asp-101, and Ser-102 contribute to the active site.

This sequence belongs to the lipid A palmitoyltransferase family. As to quaternary structure, homodimer.

It localises to the cell outer membrane. It catalyses the reaction lipid A (E. coli) + a 1-hexadecanoyl-2-acyl-sn-glycero-3-phosphocholine = hepta-acyl lipid A (E. coli) + a 2-acyl-sn-glycero-3-phosphocholine. The enzyme catalyses lipid IIA + a 1-hexadecanoyl-2-acyl-sn-glycero-3-phosphocholine = lipid IIB + a 2-acyl-sn-glycero-3-phosphocholine. It carries out the reaction lipid IVA (E. coli) + a 1-hexadecanoyl-2-acyl-sn-glycero-3-phosphocholine = lipid IVB (E. coli) + a 2-acyl-sn-glycero-3-phosphocholine. Its function is as follows. Transfers a palmitate residue from the sn-1 position of a phospholipid to the N-linked hydroxymyristate on the proximal unit of lipid A or its precursors. This chain is Lipid A palmitoyltransferase PagP, found in Escherichia coli O157:H7.